Consider the following 169-residue polypeptide: MLRSEKPVAVEDIVNIYKESPSIIITHYHGLTVSQVSSLRESLKSKEAGFKVVKNTLAKIAANQTGLNSIANLFAGPTAIVYSKEPVEMAKLVVNFAKANDNLKIIGGIVDNHVLDEHSIKDFSKLPTLNELRGNIVGLLQAPATKVVGVLQATSSSMARVIQAHASKN.

It belongs to the universal ribosomal protein uL10 family. As to quaternary structure, part of the ribosomal stalk of the 50S ribosomal subunit. The N-terminus interacts with L11 and the large rRNA to form the base of the stalk. The C-terminus forms an elongated spine to which L12 dimers bind in a sequential fashion forming a multimeric L10(L12)X complex.

Functionally, forms part of the ribosomal stalk, playing a central role in the interaction of the ribosome with GTP-bound translation factors. The sequence is that of Large ribosomal subunit protein uL10 from Rickettsia peacockii (strain Rustic).